The primary structure comprises 193 residues: Non-specific lipid transfer protein GPI-anchored 2 (193 aa).

Residues 1-22 (MSNVVVIAVVLIVASLTGHVSA) form the signal peptide. 4 disulfide bridges follow: Cys38–Cys83, Cys48–Cys67, Cys68–Cys110, and Cys81–Cys120. An N-linked (GlcNAc...) asparagine glycan is attached at Asn44. Residues 143-164 (APGSMSGAESPGGFGSGPSASR) form a disordered region. Gly165 carries the GPI-anchor amidated glycine lipid modification. Positions 166–193 (SDAPSSAPYSLFLNLIIFPLAFAFYIFC) are cleaved as a propeptide — removed in mature form.

Belongs to the plant LTP family. In terms of processing, O-glycosylated on hydroxyprolines; noncontiguous hydroxylproline residues are glycosylated with arabinogalactan. Up-regulated in the epidermis of top stems. Expressed in roots, cotyledons, seedlings, leaves, stems, buds, flower and silique walls. Preferentially expressed in the shoot apical meristem and the root meristem. Also detected in expanding leaves and petals, developing flowers, and elongating pistils, stamens and siliques.

The protein resides in the cell membrane. Lipid transfer protein that, together with LTPG1, binds to lipids and functions as a component of the cuticular lipid export machinery that performs extensive export of intracellular lipids (e.g. C29 alkane) from epidermal cells to the surface to build the cuticular wax layer and silique walls. Contributes to pre-invasive defense against some non-host powdery mildew pathogens by preventing the penetration of the epidermal cell wall by the fungal agents (e.g. Blumeria graminis f. sp. hordei (Bgh)). Involved in seed and ovule maturation and development, probably by regulating the fatty acids homeostasis during suberin and sporopollenin biosynthesis or deposition. This Arabidopsis thaliana (Mouse-ear cress) protein is Non-specific lipid transfer protein GPI-anchored 2.